We begin with the raw amino-acid sequence, 426 residues long: Tryptophan synthase beta chain (426 aa).

Position 108 is an N6-(pyridoxal phosphate)lysine (K108).

This sequence belongs to the TrpB family. In terms of assembly, tetramer of two alpha and two beta chains. Requires pyridoxal 5'-phosphate as cofactor.

It catalyses the reaction (1S,2R)-1-C-(indol-3-yl)glycerol 3-phosphate + L-serine = D-glyceraldehyde 3-phosphate + L-tryptophan + H2O. It functions in the pathway amino-acid biosynthesis; L-tryptophan biosynthesis; L-tryptophan from chorismate: step 5/5. In terms of biological role, the beta subunit is responsible for the synthesis of L-tryptophan from indole and L-serine. The sequence is that of Tryptophan synthase beta chain (trpB) from Thermoplasma volcanium (strain ATCC 51530 / DSM 4299 / JCM 9571 / NBRC 15438 / GSS1).